The following is a 665-amino-acid chain: Beta-galactosidase LacZ (665 aa).

Arg110 is a substrate binding site. Cys114 serves as a coordination point for Zn(2+). A substrate-binding site is contributed by Asn148. Glu149 functions as the Proton donor in the catalytic mechanism. Positions 157, 159, and 162 each coordinate Zn(2+). The active-site Nucleophile is Glu303. Substrate-binding positions include Trp311 and 351–354 (EKFH).

This sequence belongs to the glycosyl hydrolase 42 family.

The enzyme catalyses Hydrolysis of terminal non-reducing beta-D-galactose residues in beta-D-galactosides.. The protein is Beta-galactosidase LacZ of Heyndrickxia coagulans (Weizmannia coagulans).